The sequence spans 620 residues: 1-deoxy-D-xylulose-5-phosphate synthase (620 aa).

Thiamine diphosphate-binding positions include histidine 80 and 121–123 (GHS). Position 152 (aspartate 152) interacts with Mg(2+). Thiamine diphosphate contacts are provided by residues 153–154 (GA), asparagine 181, tyrosine 288, and glutamate 370. Asparagine 181 contributes to the Mg(2+) binding site.

This sequence belongs to the transketolase family. DXPS subfamily. As to quaternary structure, homodimer. It depends on Mg(2+) as a cofactor. Thiamine diphosphate serves as cofactor.

The enzyme catalyses D-glyceraldehyde 3-phosphate + pyruvate + H(+) = 1-deoxy-D-xylulose 5-phosphate + CO2. The protein operates within metabolic intermediate biosynthesis; 1-deoxy-D-xylulose 5-phosphate biosynthesis; 1-deoxy-D-xylulose 5-phosphate from D-glyceraldehyde 3-phosphate and pyruvate: step 1/1. Functionally, catalyzes the acyloin condensation reaction between C atoms 2 and 3 of pyruvate and glyceraldehyde 3-phosphate to yield 1-deoxy-D-xylulose-5-phosphate (DXP). The chain is 1-deoxy-D-xylulose-5-phosphate synthase from Escherichia fergusonii (strain ATCC 35469 / DSM 13698 / CCUG 18766 / IAM 14443 / JCM 21226 / LMG 7866 / NBRC 102419 / NCTC 12128 / CDC 0568-73).